A 177-amino-acid chain; its full sequence is FAPLTSRGSQQYRALTVSELTQQMFDAKNMMAACDPRHGRYLTVAAIFRGRMSMKEVDEQMLNVQNKNSSYFVEWIPNNVKTAVCDIPPRGLKMSATFIGNSTAIQELFKRISEQFTAMFRRKAFLHWYTGEGMDEMEFTEAESNMNDLVSEYQQYQDATAEEEGEFDEEEGDEEAA.

Positions 156-177 (YQDATAEEEGEFDEEEGDEEAA) are disordered. The span at 160–177 (TAEEEGEFDEEEGDEEAA) shows a compositional bias: acidic residues.

It belongs to the tubulin family. Dimer of alpha and beta chains. A typical microtubule is a hollow water-filled tube with an outer diameter of 25 nm and an inner diameter of 15 nM. Alpha-beta heterodimers associate head-to-tail to form protofilaments running lengthwise along the microtubule wall with the beta-tubulin subunit facing the microtubule plus end conferring a structural polarity. Microtubules usually have 13 protofilaments but different protofilament numbers can be found in some organisms and specialized cells. Mg(2+) serves as cofactor.

The protein resides in the cytoplasm. It is found in the cytoskeleton. Tubulin is the major constituent of microtubules, a cylinder consisting of laterally associated linear protofilaments composed of alpha- and beta-tubulin heterodimers. Microtubules grow by the addition of GTP-tubulin dimers to the microtubule end, where a stabilizing cap forms. Below the cap, tubulin dimers are in GDP-bound state, owing to GTPase activity of alpha-tubulin. In Lytechinus pictus (Painted sea urchin), this protein is Tubulin beta chain.